Consider the following 454-residue polypeptide: Probable ECA polymerase (454 aa).

11 helical membrane passes run 6 to 26 (FSGLFIVWLLATLFIGTLTWF), 37 to 57 (VFFSLLFLLTFFFGFPLTSIL), 63 to 83 (VAVVPAEVLLQALLSAGCFYA), 122 to 142 (MMAVALVSVGIFFMHNGFLLF), 157 to 177 (GVALKRFFYFFIPAMLVVYFL), 183 to 203 (AWLFFLVSTVGFGLLTYMIVG), 209 to 229 (IIIAFAIFLFIGIIRGWISPG), 230 to 250 (MLAAAGVMGIVGMFWLALKRY), 343 to 363 (LVVMGGVWFIPPGAVVVGLII), 380 to 400 (YKAAILHSFCFGAIFNMIVLA), and 411 to 431 (VIFFMVVFGACLVVAKLIYWL).

The protein belongs to the WzyE family. As to quaternary structure, probably part of a complex composed of WzxE, WzyE and WzzE.

The protein resides in the cell inner membrane. Its pathway is bacterial outer membrane biogenesis; enterobacterial common antigen biosynthesis. Probably involved in the polymerization of enterobacterial common antigen (ECA) trisaccharide repeat units. The sequence is that of Probable ECA polymerase from Cronobacter sakazakii (strain ATCC BAA-894) (Enterobacter sakazakii).